The primary structure comprises 342 residues: Elongation factor Ts (342 aa).

Positions 80–83 are involved in Mg(2+) ion dislocation from EF-Tu; sequence TDFV.

It belongs to the EF-Ts family.

The protein localises to the cytoplasm. Functionally, associates with the EF-Tu.GDP complex and induces the exchange of GDP to GTP. It remains bound to the aminoacyl-tRNA.EF-Tu.GTP complex up to the GTP hydrolysis stage on the ribosome. The protein is Elongation factor Ts of Lactobacillus delbrueckii subsp. bulgaricus (strain ATCC 11842 / DSM 20081 / BCRC 10696 / JCM 1002 / NBRC 13953 / NCIMB 11778 / NCTC 12712 / WDCM 00102 / Lb 14).